We begin with the raw amino-acid sequence, 261 residues long: 6-phosphogluconolactonase (261 aa).

Belongs to the glucosamine/galactosamine-6-phosphate isomerase family. 6-phosphogluconolactonase subfamily.

It carries out the reaction 6-phospho-D-glucono-1,5-lactone + H2O = 6-phospho-D-gluconate + H(+). Its pathway is carbohydrate degradation; pentose phosphate pathway; D-ribulose 5-phosphate from D-glucose 6-phosphate (oxidative stage): step 2/3. In terms of biological role, hydrolysis of 6-phosphogluconolactone to 6-phosphogluconate. The chain is 6-phosphogluconolactonase (pgl) from Streptomyces coelicolor (strain ATCC BAA-471 / A3(2) / M145).